The chain runs to 472 residues: tRNA(Ile)-lysidine synthase (472 aa).

Residue 25-30 coordinates ATP; sequence SGGPDS.

This sequence belongs to the tRNA(Ile)-lysidine synthase family.

The protein resides in the cytoplasm. It carries out the reaction cytidine(34) in tRNA(Ile2) + L-lysine + ATP = lysidine(34) in tRNA(Ile2) + AMP + diphosphate + H(+). Functionally, ligates lysine onto the cytidine present at position 34 of the AUA codon-specific tRNA(Ile) that contains the anticodon CAU, in an ATP-dependent manner. Cytidine is converted to lysidine, thus changing the amino acid specificity of the tRNA from methionine to isoleucine. This chain is tRNA(Ile)-lysidine synthase (tilS), found in Bacillus subtilis (strain 168).